Reading from the N-terminus, the 353-residue chain is Fe(3+) ions import ATP-binding protein FbpC (353 aa).

In terms of domain architecture, ABC transporter spans 9 to 239 (VTFQNVRKSF…PASSFIADFM (231 aa)). 41 to 48 (GPSGCGKT) lines the ATP pocket.

It belongs to the ABC transporter superfamily. Fe(3+) ion importer (TC 3.A.1.10) family. In terms of assembly, the complex is composed of two ATP-binding proteins (FbpC), two transmembrane proteins (FbpB) and a solute-binding protein (FbpA).

It is found in the cell inner membrane. The catalysed reaction is Fe(3+)(out) + ATP + H2O = Fe(3+)(in) + ADP + phosphate + H(+). Part of the ABC transporter complex FbpABC involved in Fe(3+) ions import. Responsible for energy coupling to the transport system. This Rhizobium etli (strain ATCC 51251 / DSM 11541 / JCM 21823 / NBRC 15573 / CFN 42) protein is Fe(3+) ions import ATP-binding protein FbpC.